Reading from the N-terminus, the 279-residue chain is Phosphatidylglycerol--prolipoprotein diacylglyceryl transferase (279 aa).

The next 3 membrane-spanning stretches (helical) occupy residues 18 to 38 (LSVRWYGIIIAVGILLGYFVA), 55 to 75 (IIFYSALFGFIAARIYFVIFQ), and 89 to 109 (IWHGGIAIHGGLIGGFIAGVI). Arg-137 is a binding site for a 1,2-diacyl-sn-glycero-3-phospho-(1'-sn-glycerol). Helical transmembrane passes span 203 to 223 (LGETFFLYLTWYSIGRFFIEG) and 235 to 255 (IRVAQLVSILLILISISLIVY).

It belongs to the Lgt family.

The protein localises to the cell membrane. It catalyses the reaction L-cysteinyl-[prolipoprotein] + a 1,2-diacyl-sn-glycero-3-phospho-(1'-sn-glycerol) = an S-1,2-diacyl-sn-glyceryl-L-cysteinyl-[prolipoprotein] + sn-glycerol 1-phosphate + H(+). It functions in the pathway protein modification; lipoprotein biosynthesis (diacylglyceryl transfer). In terms of biological role, catalyzes the transfer of the diacylglyceryl group from phosphatidylglycerol to the sulfhydryl group of the N-terminal cysteine of a prolipoprotein, the first step in the formation of mature lipoproteins. The sequence is that of Phosphatidylglycerol--prolipoprotein diacylglyceryl transferase from Staphylococcus aureus (strain MSSA476).